A 229-amino-acid polypeptide reads, in one-letter code: Heptaprenylglyceryl phosphate synthase (229 aa).

Lys12 is a binding site for sn-glycerol 1-phosphate. Mg(2+) contacts are provided by Asp14 and Ser40. Sn-glycerol 1-phosphate contacts are provided by residues 159-164 (YLEYSG), Gly189, and 209-210 (GN).

Belongs to the GGGP/HepGP synthase family. Group I subfamily. Homodimer. The cofactor is Mg(2+).

The enzyme catalyses sn-glycerol 1-phosphate + all-trans-heptaprenyl diphosphate = 3-heptaprenyl-sn-glycero-1-phosphate + diphosphate. Its pathway is membrane lipid metabolism; glycerophospholipid metabolism. Functionally, prenyltransferase that catalyzes in vivo the transfer of the heptaprenyl moiety of heptaprenyl pyrophosphate (HepPP; 35 carbon atoms) to the C3 hydroxyl of sn-glycerol-1-phosphate (G1P), producing heptaprenylglyceryl phosphate (HepGP). This reaction is an ether-bond-formation step in the biosynthesis of archaea-type G1P-based membrane lipids found in Bacillales. The polypeptide is Heptaprenylglyceryl phosphate synthase (Bacillus cereus (strain B4264)).